The following is a 1133-amino-acid chain: Envelopment polyprotein (1133 aa).

The first 17 residues, Met1–Leu17, serve as a signal peptide directing secretion. The Lumenal segment spans residues Lys18 to Ala484. Cystine bridges form between Cys27/Cys149, Cys61/Cys155, Cys107/Cys126, Cys131/Cys136, Cys173/Cys183, Cys208/Cys245, Cys232/Cys349, Cys374/Cys433, Cys378/Cys387, Cys403/Cys422, and Cys450/Cys473. N-linked (GlcNAc...) asparagine; by host glycosylation occurs at Asn132. Residues Asn233 and Asn345 are each glycosylated (N-linked (GlcNAc...) asparagine; by host). Asn397 is a glycosylation site (N-linked (GlcNAc...) asparagine; by host). The helical transmembrane segment at Leu485–Leu504 threads the bilayer. At Leu505–Tyr626 the chain is on the cytoplasmic side. The interval Leu514 to Lys531 is binding to the ribonucleoprotein. 2 consecutive CCHC-type zinc fingers follow at residues Cys543 to Cys563 and Cys568 to Cys589. Binding to the ribonucleoprotein regions lie at residues Tyr586–Val603, Gln590–Lys601, and Gly609–Ser623. The ITAM domain maps to Gly609–Thr632. A YxxL motif is present at residues Tyr613 to Leu616. The chain crosses the membrane as a helical span at residues Ile627 to Ala647. The Lumenal portion of the chain corresponds to Glu648–Trp1104. 8 disulfide bridges follow: Cys733-Cys768, Cys737-Cys775, Cys749-Cys883, Cys763-Cys894, Cys778-Cys902, Cys804-Cys813, Cys821-Cys830, and Cys861-Cys865. Residues Tyr755 to Cys775 form a fusion loop region. The N-linked (GlcNAc...) asparagine; by host glycan is linked to Asn926. Intrachain disulfides connect Cys968/Cys998, Cys991/Cys1043, Cys1008/Cys1013, Cys1044/Cys1049, and Cys1083/Cys1087. Residues Val1105–Cys1125 form a helical membrane-spanning segment. Residues Leu1120 to Ser1133 are binding to the ribonucleoprotein. Topologically, residues Pro1126–Ser1133 are cytoplasmic.

The protein belongs to the hantavirus envelope glycoprotein family. In terms of assembly, homodimer. Homotetramer; forms heterotetrameric Gn-Gc spikes in the pre-fusion conformation. Interacts (via C-terminus) with the nucleoprotein. Interacts with host TUFM; this interaction contributes to the virus-induced degradation of mitochondria by autophagy, which leads to degradation of host MAVS and inhibition of type I interferon (IFN) responses. Interacts with host MAP1LC3B; this interaction contributes to the virus-induced degradation of mitochondria by autophagy, which leads to degradation of host MAVS and inhibition of type I interferon (IFN) responses. Homodimer. Homotetramer; forms heterotetrameric Gn-Gc spikes in the pre-fusion conformation. Homotrimer; forms homotrimer in the post-fusion conformation at acidic pH. Interacts (via C-terminus) with the nucleoprotein. In terms of processing, envelope polyprotein precursor is quickly cleaved in vivo just after synthesis, presumably by host signal peptidase.

It localises to the virion membrane. Its subcellular location is the host cell surface. It is found in the host Golgi apparatus membrane. The protein localises to the host endoplasmic reticulum membrane. The protein resides in the host mitochondrion. Its function is as follows. Forms homotetramers with glycoprotein C at the surface of the virion. Attaches the virion to host cell receptors including integrin ITGAV/ITGB3. This attachment induces virion internalization predominantly through clathrin-dependent endocytosis. Mediates the assembly and budding of infectious virus particles through its interaction with the nucleocapsid protein and the viral genome. May dysregulate normal immune and endothelial cell responses through an ITAM motif. Translocates to mitochondria, binds to host TUFM and recruits MAP1LC3B. These interactions induce mitochondrial autophagy and therefore destruction of host MAVS leading to inhibition of type I interferon (IFN) responses. Concomitant breakdown of glycoprotein N is apparently prevented by the nucleoprotein that may inhibit Gn-stimulated autophagosome-lysosome fusion. Interacts with the viral genomic RNA. Forms homotetramers with glycoprotein N at the surface of the virion. Attaches the virion to host cell receptors including integrin ITGAV/ITGB3. This attachment induces virion internalization predominantly through clathrin-dependent endocytosis. Class II fusion protein that promotes fusion of viral membrane with host endosomal membrane after endocytosis of the virion. The sequence is that of Envelopment polyprotein (GP) from Homo sapiens (Human).